A 294-amino-acid polypeptide reads, in one-letter code: Shikimate dehydrogenase (NADP(+)) (294 aa).

Shikimate is bound by residues 23-25 and T70; that span reads SRS. Catalysis depends on K74, which acts as the Proton acceptor. Shikimate is bound by residues N95 and D110. NADP(+) contacts are provided by residues 135-139, 159-164, and M232; these read GAGGA and NRTASR. Y234 serves as a coordination point for shikimate. G255 is a binding site for NADP(+).

It belongs to the shikimate dehydrogenase family. As to quaternary structure, homodimer.

It catalyses the reaction shikimate + NADP(+) = 3-dehydroshikimate + NADPH + H(+). Its pathway is metabolic intermediate biosynthesis; chorismate biosynthesis; chorismate from D-erythrose 4-phosphate and phosphoenolpyruvate: step 4/7. Involved in the biosynthesis of the chorismate, which leads to the biosynthesis of aromatic amino acids. Catalyzes the reversible NADPH linked reduction of 3-dehydroshikimate (DHSA) to yield shikimate (SA). The chain is Shikimate dehydrogenase (NADP(+)) from Cupriavidus pinatubonensis (strain JMP 134 / LMG 1197) (Cupriavidus necator (strain JMP 134)).